The sequence spans 255 residues: Homeobox protein DLX-1 (255 aa).

A compositionally biased stretch (polar residues) spans 1-14 (MTMTTMPESLNSPV). Disordered regions lie at residues 1–38 (MTMTTMPESLNSPVSGKAVFMEFGPPNQQMSPSPMSHG) and 95–118 (SLAQSRLEDPGADSEKSTVVEGGE). Low complexity predominate over residues 25–36 (PPNQQMSPSPMS). Residues 100–112 (RLEDPGADSEKST) are compositionally biased toward basic and acidic residues. A DNA-binding region (homeobox) is located at residues 128–187 (IRKPRTIYSSLQLQALNRRFQQTQYLALPERAELAASLGLTQTQVKIWFQNKRSKFKKLM). The tract at residues 204–233 (ALSAGSPPVPPGWNPNSSSGKGSGSSAGSY) is disordered. Residues 217–232 (NPNSSSGKGSGSSAGS) show a composition bias toward low complexity.

The protein belongs to the distal-less homeobox family. As to quaternary structure, interacts with SMAD4 (via homeobox DNA-binding domain). Interacts (via homeobox DNA-binding domain) with POU4F2; this interaction suppresses DLX1-mediated transcriptional activity in postnatal retina and enhances retinal ganglion cell (RGC) differentiation. As to expression, expressed in a restricted region of the developing brain, within the diencephalon and the adjacent telencephalic regions.

Its subcellular location is the nucleus. Functionally, plays a role as a transcriptional activator or repressor. Inhibits several cytokine signaling pathways, such as TGFB1, activin-A/INHBA and BMP4 by interfering with the transcriptional stimulatory activity of transcription factors, such as MSX2, FAST2, SMAD2 and SMAD3 during hematopoietic cell differentiation. Plays a role in terminal differentiation of interneurons, such as amacrine and bipolar cells in the developing retina. Likely to play a regulatory role in the development of the ventral forebrain. May play a role in craniofacial patterning and morphogenesis and may be involved in the early development of diencephalic subdivisions. In Mus musculus (Mouse), this protein is Homeobox protein DLX-1 (Dlx1).